We begin with the raw amino-acid sequence, 328 residues long: MRQPHITALLLLPLLLRSGTEGAEAMRACGHPRMFNRMVGGEDALEGEWPWQVSIQRNGAHFCGGSLIAPTWVLTAAHCFSNTSDISIYQVLLGALKLQQPGPHALYVPVKRVKSHPEYQGMASSADVALVELQVPVTFTKYILPVCLPDPSVVFKSGMNCWVTGWGSPSEQDRLPNPRILQKLAVPLIDTPKCNLLYSKDAEADIQLKTIKDDMLCAGFAEGKKDACKGDSGGPLVCLVDQSWVQAGVISWGEGCARRNRPGVYIRVASHYQWIHQIIPELQFQGRAGSQQQQRDPRGWQPLAENSAPCLAAHAVLLALGALMLGIL.

Positions 1-22 (MRQPHITALLLLPLLLRSGTEG) are cleaved as a signal peptide. A propeptide spans 23–37 (AEAMRACGHPRMFNR) (activation peptide). The 243-residue stretch at 38–280 (MVGGEDALEG…HYQWIHQIIP (243 aa)) folds into the Peptidase S1 domain. Cys-63 and Cys-79 are disulfide-bonded. His-78 functions as the Charge relay system in the catalytic mechanism. A glycan (N-linked (GlcNAc...) asparagine) is linked at Asn-82. Asp-127 serves as the catalytic Charge relay system. Disulfide bonds link Cys-161-Cys-238, Cys-194-Cys-217, and Cys-228-Cys-256. Residue Ser-232 is the Charge relay system of the active site.

The protein belongs to the peptidase S1 family.

The protein resides in the secreted. The protein is Serine protease 27 (Prss27) of Rattus norvegicus (Rat).